The following is a 160-amino-acid chain: Serine-protein kinase RsbW (160 aa).

This sequence belongs to the anti-sigma-factor family.

The enzyme catalyses L-seryl-[protein] + ATP = O-phospho-L-seryl-[protein] + ADP + H(+). It catalyses the reaction L-threonyl-[protein] + ATP = O-phospho-L-threonyl-[protein] + ADP + H(+). Its function is as follows. Negative regulator of sigma-B activity. Phosphorylates and inactivates its specific antagonist protein, RsbV. Upon phosphorylation of RsbV, RsbW is released and binds to sigma-B, thereby blocking its ability to form an RNA polymerase holoenzyme (E-sigma-B). This is Serine-protein kinase RsbW from Bacillus anthracis (strain A0248).